Consider the following 467-residue polypeptide: UDP-N-acetylmuramate--L-alanine ligase (467 aa).

112-118 (GTHGKTT) is a binding site for ATP.

It belongs to the MurCDEF family.

The protein localises to the cytoplasm. It carries out the reaction UDP-N-acetyl-alpha-D-muramate + L-alanine + ATP = UDP-N-acetyl-alpha-D-muramoyl-L-alanine + ADP + phosphate + H(+). It functions in the pathway cell wall biogenesis; peptidoglycan biosynthesis. In terms of biological role, cell wall formation. The polypeptide is UDP-N-acetylmuramate--L-alanine ligase (Paraburkholderia phytofirmans (strain DSM 17436 / LMG 22146 / PsJN) (Burkholderia phytofirmans)).